The sequence spans 485 residues: tRNA sulfurtransferase (485 aa).

A THUMP domain is found at 61 to 165 (EELIALLQRI…DDKMMLVKAR (105 aa)). Residues 183 to 184 (LI), K265, G287, and Q296 contribute to the ATP site. A disulfide bond links C344 and C456. Positions 404–483 (LSENEVILDI…FSNVRVFAKK (80 aa)) constitute a Rhodanese domain. Residue C456 is the Cysteine persulfide intermediate of the active site.

Belongs to the ThiI family.

It is found in the cytoplasm. The enzyme catalyses [ThiI sulfur-carrier protein]-S-sulfanyl-L-cysteine + a uridine in tRNA + 2 reduced [2Fe-2S]-[ferredoxin] + ATP + H(+) = [ThiI sulfur-carrier protein]-L-cysteine + a 4-thiouridine in tRNA + 2 oxidized [2Fe-2S]-[ferredoxin] + AMP + diphosphate. The catalysed reaction is [ThiS sulfur-carrier protein]-C-terminal Gly-Gly-AMP + S-sulfanyl-L-cysteinyl-[cysteine desulfurase] + AH2 = [ThiS sulfur-carrier protein]-C-terminal-Gly-aminoethanethioate + L-cysteinyl-[cysteine desulfurase] + A + AMP + 2 H(+). It functions in the pathway cofactor biosynthesis; thiamine diphosphate biosynthesis. Functionally, catalyzes the ATP-dependent transfer of a sulfur to tRNA to produce 4-thiouridine in position 8 of tRNAs, which functions as a near-UV photosensor. Also catalyzes the transfer of sulfur to the sulfur carrier protein ThiS, forming ThiS-thiocarboxylate. This is a step in the synthesis of thiazole, in the thiamine biosynthesis pathway. The sulfur is donated as persulfide by IscS. The polypeptide is tRNA sulfurtransferase (Haemophilus influenzae (strain PittEE)).